Here is a 1133-residue protein sequence, read N- to C-terminus: DNA-directed RNA polymerase subunit beta (1133 aa).

The disordered stretch occupies residues 1085-1133 (ADVSSRHTPSRPTYESVTSEDLSPAAGGTFTLARRSREEDEDREEEDDF). Polar residues predominate over residues 1090 to 1105 (RHTPSRPTYESVTSED). Acidic residues predominate over residues 1123-1133 (EDEDREEEDDF).

It belongs to the RNA polymerase beta chain family. In cyanobacteria the RNAP catalytic core is composed of 2 alpha, 1 beta, 1 beta', 1 gamma and 1 omega subunit. When a sigma factor is associated with the core the holoenzyme is formed, which can initiate transcription.

The catalysed reaction is RNA(n) + a ribonucleoside 5'-triphosphate = RNA(n+1) + diphosphate. Functionally, DNA-dependent RNA polymerase catalyzes the transcription of DNA into RNA using the four ribonucleoside triphosphates as substrates. The polypeptide is DNA-directed RNA polymerase subunit beta (Synechococcus sp. (strain JA-3-3Ab) (Cyanobacteria bacterium Yellowstone A-Prime)).